Here is a 426-residue protein sequence, read N- to C-terminus: Protein trichome birefringence-like 19 (426 aa).

A helical; Signal-anchor for type II membrane protein transmembrane segment spans residues 15 to 35; sequence LLIAVTIATSLLTIIPLLYPL. A GDS motif motif is present at residues 142 to 144; sequence GDS. The short motif at 388-402 is the DCXHWCLPGXXDXWN motif element; the sequence is DCVHWCLPGPIDNLN.

The protein belongs to the PC-esterase family. TBL subfamily.

It is found in the membrane. In terms of biological role, may act as a bridging protein that binds pectin and other cell wall polysaccharides. Probably involved in maintaining esterification of pectins. May be involved in the specific O-acetylation of cell wall polymers. The protein is Protein trichome birefringence-like 19 (TBL19) of Arabidopsis thaliana (Mouse-ear cress).